We begin with the raw amino-acid sequence, 152 residues long: Xanthine-guanine phosphoribosyltransferase (152 aa).

Residues 37-38 (RG), R69, and 88-96 (DDLVDTGGT) each bind 5-phospho-alpha-D-ribose 1-diphosphate. R69 contributes to the GMP binding site. D89 contributes to the Mg(2+) binding site. Guanine is bound by residues D92 and I135. The xanthine site is built by D92 and I135. GMP contacts are provided by residues 92–96 (DTGGT) and 134–135 (WI).

Belongs to the purine/pyrimidine phosphoribosyltransferase family. XGPT subfamily. Homotetramer. It depends on Mg(2+) as a cofactor.

The protein resides in the cell inner membrane. It catalyses the reaction GMP + diphosphate = guanine + 5-phospho-alpha-D-ribose 1-diphosphate. It carries out the reaction XMP + diphosphate = xanthine + 5-phospho-alpha-D-ribose 1-diphosphate. The catalysed reaction is IMP + diphosphate = hypoxanthine + 5-phospho-alpha-D-ribose 1-diphosphate. It functions in the pathway purine metabolism; GMP biosynthesis via salvage pathway; GMP from guanine: step 1/1. Its pathway is purine metabolism; XMP biosynthesis via salvage pathway; XMP from xanthine: step 1/1. Its function is as follows. Purine salvage pathway enzyme that catalyzes the transfer of the ribosyl-5-phosphate group from 5-phospho-alpha-D-ribose 1-diphosphate (PRPP) to the N9 position of the 6-oxopurines guanine and xanthine to form the corresponding ribonucleotides GMP (guanosine 5'-monophosphate) and XMP (xanthosine 5'-monophosphate), with the release of PPi. To a lesser extent, also acts on hypoxanthine. This chain is Xanthine-guanine phosphoribosyltransferase, found in Pectobacterium carotovorum subsp. carotovorum (strain PC1).